A 78-amino-acid polypeptide reads, in one-letter code: Acyl carrier protein (78 aa).

A Carrier domain is found at 2-77; it reads STIEERVKKI…AAIDYVNSHQ (76 aa). The residue at position 37 (S37) is an O-(pantetheine 4'-phosphoryl)serine.

Belongs to the acyl carrier protein (ACP) family. Post-translationally, 4'-phosphopantetheine is transferred from CoA to a specific serine of apo-ACP by AcpS. This modification is essential for activity because fatty acids are bound in thioester linkage to the sulfhydryl of the prosthetic group.

It localises to the cytoplasm. It participates in lipid metabolism; fatty acid biosynthesis. Carrier of the growing fatty acid chain in fatty acid biosynthesis. In Pseudomonas putida (strain W619), this protein is Acyl carrier protein.